A 1946-amino-acid polypeptide reads, in one-letter code: Integrin beta-like protein E (1946 aa).

Positions 1–22 (MNNLFKFLFVLLAIFCPPISDL) are cleaved as a signal peptide. The Extracellular segment spans residues 23–1875 (VVSHGVPQQH…ATTQTTNNKT (1853 aa)). Residues asparagine 107, asparagine 134, and asparagine 203 are each glycosylated (N-linked (GlcNAc...) asparagine). The 38-residue stretch at 423 to 460 (YGQNCDPTPPCDKGIPNEGILGDGKCMCINGYSGDKCD) folds into the EGF-like domain. 2 disulfides stabilise this stretch: cysteine 433–cysteine 448 and cysteine 450–cysteine 459. Positions 514–699 (DVFVLVDVNV…AGLKSVLSNV (186 aa)) constitute a VWFA domain. 18 N-linked (GlcNAc...) asparagine glycosylation sites follow: asparagine 705, asparagine 860, asparagine 1043, asparagine 1113, asparagine 1177, asparagine 1374, asparagine 1401, asparagine 1513, asparagine 1611, asparagine 1620, asparagine 1662, asparagine 1671, asparagine 1737, asparagine 1743, asparagine 1762, asparagine 1812, asparagine 1852, and asparagine 1873. Residues 1876 to 1896 (VLTGAIAGAAAGTALIAAAAW) form a helical membrane-spanning segment. Residues 1897–1946 (KLLRKAAPPTDTFFSEAAFLGDGVNANPLYEQSASAAENPLYQSASDNTD) are Cytoplasmic-facing.

This sequence belongs to the SIB family. As to quaternary structure, interacts with talA/talin.

The protein resides in the membrane. Implicated in cellular adhesion. The protein is Integrin beta-like protein E (sibE) of Dictyostelium discoideum (Social amoeba).